A 202-amino-acid chain; its full sequence is Nascent polypeptide-associated complex subunit alpha (202 aa).

A compositionally biased stretch (basic and acidic residues) spans 1-19 (MADPRVEELPDEEVPKTNV). Positions 1 to 44 (MADPRVEELPDEEVPKTNVEDAGSDSESEAGEEPTIPGGAAVAV) are disordered. Positions 22–32 (AGSDSESEAGE) are enriched in acidic residues. Positions 46 to 111 (SRNEKKARKA…AKIEDLNAQA (66 aa)) constitute an NAC-A/B domain. Positions 118–165 (QLAAQEAAQEHAGHEHEDILGKAKEPEAEKKEAEEDDGEEVDESGLEA) are disordered. Residues 125–150 (AQEHAGHEHEDILGKAKEPEAEKKEA) are compositionally biased toward basic and acidic residues. Acidic residues predominate over residues 151 to 162 (EEDDGEEVDESG). Positions 163–202 (LEAKDIELVMAQANVSRKKAVKALRENDNDIVNSIMALSI) constitute a UBA domain.

This sequence belongs to the NAC-alpha family. As to quaternary structure, part of the nascent polypeptide-associated complex (NAC), consisting of egd2 and egd1. NAC associates with ribosomes via egd1.

The protein localises to the cytoplasm. It is found in the nucleus. Its function is as follows. Component of the nascent polypeptide-associated complex (NAC), a dynamic component of the ribosomal exit tunnel, protecting the emerging polypeptides from interaction with other cytoplasmic proteins to ensure appropriate nascent protein targeting. The NAC complex also promotes mitochondrial protein import by enhancing productive ribosome interactions with the outer mitochondrial membrane and blocks the inappropriate interaction of ribosomes translating non-secretory nascent polypeptides with translocation sites in the membrane of the endoplasmic reticulum. Egd2 may also be involved in transcription regulation. The sequence is that of Nascent polypeptide-associated complex subunit alpha (egd2) from Aspergillus terreus (strain NIH 2624 / FGSC A1156).